A 418-amino-acid polypeptide reads, in one-letter code: STAM-binding protein-like A (418 aa).

Residues 199 to 218 (PDVHGPPQASLSPQTPPAGA) form a disordered region. One can recognise an MPN domain in the interval 251–382 (LFVPAELCQR…LTDYGMDDVG (132 aa)). Zn(2+)-binding residues include histidine 329, histidine 331, aspartate 342, histidine 344, cysteine 384, histidine 390, and histidine 392. Positions 329–342 (HTHPTQTAFLSSVD) match the JAMM motif motif.

Belongs to the peptidase M67C family. Zn(2+) is required as a cofactor.

Zinc metalloprotease that specifically cleaves 'Lys-63'-linked polyubiquitin chains. Does not cleave 'Lys-48'-linked polyubiquitin chains. Functions at the endosome and is able to oppose the ubiquitin-dependent sorting of receptors to lysosomes. This chain is STAM-binding protein-like A (stambpa), found in Danio rerio (Zebrafish).